Reading from the N-terminus, the 590-residue chain is Protein Spindly (590 aa).

Residues 1–401 (MSDLEDEIKV…SMARMKALSE (401 aa)) are a coiled coil. Positions 446-590 (NKAQVQKRRR…KTMANECAQQ (145 aa)) are disordered. 2 stretches are compositionally biased toward basic and acidic residues: residues 483 to 497 (SNEK…HPVE) and 518 to 527 (RESKSVRICE). 2 stretches are compositionally biased toward polar residues: residues 541–554 (VNDS…QTHQ) and 572–590 (QQPT…CAQQ).

This sequence belongs to the Spindly family.

The protein localises to the chromosome. It localises to the centromere. The protein resides in the kinetochore. Required for the localization of dynein and dynactin to the mitotic kintochore. Dynein is believed to control the initial lateral interaction between the kinetochore and spindle microtubules and to facilitate the subsequent formation of end-on kinetochore-microtubule attachments mediated by the NDC80 complex. May act as an adapter protein linking the dynein motor complex to various cargos. This Danio rerio (Zebrafish) protein is Protein Spindly (spdl1).